The following is a 432-amino-acid chain: Adenylosuccinate synthetase (432 aa).

GTP contacts are provided by residues 12–18 (GDEGKGK) and 40–42 (GHT). Residue aspartate 13 is the Proton acceptor of the active site. Residues aspartate 13 and glycine 40 each coordinate Mg(2+). IMP is bound by residues 13–16 (DEGK), 38–41 (NAGH), threonine 130, arginine 144, glutamine 225, threonine 240, and arginine 304. Histidine 41 serves as the catalytic Proton donor. 300–306 (STTGRPR) provides a ligand contact to substrate. GTP contacts are provided by residues arginine 306, 332-334 (KLD), and 414-416 (SVG).

This sequence belongs to the adenylosuccinate synthetase family. Homodimer. The cofactor is Mg(2+).

The protein localises to the cytoplasm. The catalysed reaction is IMP + L-aspartate + GTP = N(6)-(1,2-dicarboxyethyl)-AMP + GDP + phosphate + 2 H(+). Its pathway is purine metabolism; AMP biosynthesis via de novo pathway; AMP from IMP: step 1/2. Functionally, plays an important role in the de novo pathway of purine nucleotide biosynthesis. Catalyzes the first committed step in the biosynthesis of AMP from IMP. The sequence is that of Adenylosuccinate synthetase from Citrifermentans bemidjiense (strain ATCC BAA-1014 / DSM 16622 / JCM 12645 / Bem) (Geobacter bemidjiensis).